A 317-amino-acid polypeptide reads, in one-letter code: MDKLTAMATFVKVVDAGSFTRAADALGLPKARVSQRVSDLEKHLGVRLLNRTTRALSLTHDGSAYFDKCQVLLQQIDELEATLRGGTATPIGRLRVDSLITIARWVIAPRLHDFQARYPRIQLRLSSSDRISNLLEDGIDCTIRGGALKDSSMIARHLCDIQMGLYASPEYLASIGGVDSPNDLSQFRRLSWFSGRERNPFMWELESGPERFVVQSGDGMQFDEPDVAISACMAGSGICPGAPFAVAGFVRAGKLVPVLPQWHFSAAPVHVIYPGSRHLSVRVRCFVNWVMELFAENPEIQLTPIALALESGLAQRT.

The region spanning 1 to 59 (MDKLTAMATFVKVVDAGSFTRAADALGLPKARVSQRVSDLEKHLGVRLLNRTTRALSLT) is the HTH lysR-type domain. The H-T-H motif DNA-binding region spans 19 to 38 (FTRAADALGLPKARVSQRVS).

Belongs to the LysR transcriptional regulatory family.

Represses the transcription of the operon that consists of PA14_22510 to PA14_22540. The protein is HTH-type transcriptional repressor PA14_22550 of Pseudomonas aeruginosa (strain UCBPP-PA14).